Here is a 202-residue protein sequence, read N- to C-terminus: MNLLHIKVSPNLFGSASREVSDYLVDRLKVKHPQLNETVLDLSQEPLPHLDGFTIEAFFTEPEQRTEQQKNAVRLSDRMVDMLFASELIVLSSPMWNLGLPSVLKAWFDHITRAGRTFRFTDGGDKIGLVADRKVYVVMASGSAFSNGPYVSHDQFTPYINVAFQYVGIRDLNFIRIDGTHDPLTRDVAVPKAISSVDEMII.

FMN contacts are provided by residues Ser9, 15-17, and 95-98; these read SAS and MWNL.

This sequence belongs to the azoreductase type 1 family. As to quaternary structure, homodimer. The cofactor is FMN.

It carries out the reaction 2 a quinone + NADH + H(+) = 2 a 1,4-benzosemiquinone + NAD(+). It catalyses the reaction N,N-dimethyl-1,4-phenylenediamine + anthranilate + 2 NAD(+) = 2-(4-dimethylaminophenyl)diazenylbenzoate + 2 NADH + 2 H(+). Functionally, quinone reductase that provides resistance to thiol-specific stress caused by electrophilic quinones. Its function is as follows. Also exhibits azoreductase activity. Catalyzes the reductive cleavage of the azo bond in aromatic azo compounds to the corresponding amines. This is FMN-dependent NADH:quinone oxidoreductase 2 from Hahella chejuensis (strain KCTC 2396).